The chain runs to 304 residues: D-tagatose-1-phosphate kinase (304 aa).

Aspartate 250 (proton acceptor) is an active-site residue.

It belongs to the carbohydrate kinase PfkB family. Mg(2+) is required as a cofactor.

The enzyme catalyses alpha-D-tagatopyranose 1-phosphate + ATP = D-tagatofuranose 1,6-bisphosphate + ADP + H(+). The protein operates within carbohydrate degradation. In terms of biological role, kinase involved in a D-tagatose catabolic pathway. Catalyzes the phosphorylation of D-tagatose-1-phosphate (Tag-1P) to D-tagatose-1,6-bisphosphate. This chain is D-tagatose-1-phosphate kinase, found in Klebsiella oxytoca.